A 487-amino-acid chain; its full sequence is NADH-quinone oxidoreductase subunit N (487 aa).

The next 14 helical transmembrane spans lie at 8–28, 35–55, 78–98, 104–124, 125–145, 159–179, 203–223, 235–255, 271–291, 297–317, 328–348, 376–396, 409–428, and 451–471; these read LIAM…MLSI, FINA…LYFV, GLVI…LVGY, EFYL…SANH, LASL…LIGY, YMLL…LLYA, ILAG…LVPF, PAPV…AVVM, LVLS…AISQ, LLGY…VAVQ, IGVY…VVSL, AVMT…GFIG, LWWL…YYYL, and ALTA…VLGI.

It belongs to the complex I subunit 2 family. NDH-1 is composed of 13 different subunits. Subunits NuoA, H, J, K, L, M, N constitute the membrane sector of the complex.

It is found in the cell inner membrane. The enzyme catalyses a quinone + NADH + 5 H(+)(in) = a quinol + NAD(+) + 4 H(+)(out). Functionally, NDH-1 shuttles electrons from NADH, via FMN and iron-sulfur (Fe-S) centers, to quinones in the respiratory chain. The immediate electron acceptor for the enzyme in this species is believed to be ubiquinone. Couples the redox reaction to proton translocation (for every two electrons transferred, four hydrogen ions are translocated across the cytoplasmic membrane), and thus conserves the redox energy in a proton gradient. The polypeptide is NADH-quinone oxidoreductase subunit N (Yersinia pseudotuberculosis serotype O:1b (strain IP 31758)).